The sequence spans 205 residues: Holliday junction branch migration complex subunit RuvA (205 aa).

The segment at 1–64 (MIGRLRGIIL…EDAQLLFGFN (64 aa)) is domain I. The interval 65 to 142 (DKQERALFRE…KGLSGDLFNP (78 aa)) is domain II. The segment at 143–156 (VSDIPLASPASAES) is flexible linker. Residues 157-205 (RASDPEAEAAAALVALGYKPQEASRMISKIARPEADCETLIRDALRAAL) form a domain III region.

It belongs to the RuvA family. In terms of assembly, homotetramer. Forms an RuvA(8)-RuvB(12)-Holliday junction (HJ) complex. HJ DNA is sandwiched between 2 RuvA tetramers; dsDNA enters through RuvA and exits via RuvB. An RuvB hexamer assembles on each DNA strand where it exits the tetramer. Each RuvB hexamer is contacted by two RuvA subunits (via domain III) on 2 adjacent RuvB subunits; this complex drives branch migration. In the full resolvosome a probable DNA-RuvA(4)-RuvB(12)-RuvC(2) complex forms which resolves the HJ.

Its subcellular location is the cytoplasm. In terms of biological role, the RuvA-RuvB-RuvC complex processes Holliday junction (HJ) DNA during genetic recombination and DNA repair, while the RuvA-RuvB complex plays an important role in the rescue of blocked DNA replication forks via replication fork reversal (RFR). RuvA specifically binds to HJ cruciform DNA, conferring on it an open structure. The RuvB hexamer acts as an ATP-dependent pump, pulling dsDNA into and through the RuvAB complex. HJ branch migration allows RuvC to scan DNA until it finds its consensus sequence, where it cleaves and resolves the cruciform DNA. This chain is Holliday junction branch migration complex subunit RuvA, found in Pectobacterium carotovorum subsp. carotovorum (strain PC1).